The chain runs to 443 residues: Zinc finger protein 713 (443 aa).

The segment covering 1–10 has biased composition (polar residues); sequence MPSQNAVFSQ. 2 disordered regions span residues 1 to 23 and 99 to 118; these read MPSQNAVFSQEGNMEEEEMNDGS and DTHPDGENRPEIKKSTTSQN. The KRAB domain maps to 32–102; the sequence is LTFQDVAVDF…ERDSLLDTHP (71 aa). A compositionally biased stretch (basic and acidic residues) spans 99–112; it reads DTHPDGENRPEIKK. The segment at 255–280 adopts a C2H2-type 1; degenerate zinc-finger fold; it reads HTAEKPSECGKAFSHTSSLSQPQMLL. 5 C2H2-type zinc fingers span residues 286 to 308, 314 to 336, 342 to 364, 370 to 392, and 398 to 420; these read YKCDECGKRFSQRIHLIQHQRIH, FICNGCGKAFRQHSSFTQHLRIH, YKCNQCGKAFSRITSLTEHHRLH, YECGFCGKAFSQRTHLNQHERTH, and YKCNECGKAFSQSAHLNQHRKIH.

It belongs to the krueppel C2H2-type zinc-finger protein family. Expressed in fetal and adult brain.

The protein localises to the nucleus. Functionally, may be involved in transcriptional regulation. The chain is Zinc finger protein 713 from Homo sapiens (Human).